The following is a 218-amino-acid chain: Pyrrolidone-carboxylate peptidase (218 aa).

Catalysis depends on residues Glu81, Cys144, and His169.

It belongs to the peptidase C15 family. In terms of assembly, homotetramer.

Its subcellular location is the cytoplasm. It carries out the reaction Release of an N-terminal pyroglutamyl group from a polypeptide, the second amino acid generally not being Pro.. Functionally, removes 5-oxoproline from various penultimate amino acid residues except L-proline. In Deinococcus radiodurans (strain ATCC 13939 / DSM 20539 / JCM 16871 / CCUG 27074 / LMG 4051 / NBRC 15346 / NCIMB 9279 / VKM B-1422 / R1), this protein is Pyrrolidone-carboxylate peptidase (pcp).